The sequence spans 926 residues: DNA topoisomerase 3-alpha (926 aa).

One can recognise a Toprim domain in the interval 10–154 (TVLNVAEKPS…NLFIRRAHFS (145 aa)). E16, D123, and D125 together coordinate Mg(2+). Residues 172–604 (NQLFAEAVDA…CLQQMKACFL (433 aa)) enclose the Topo IA-type catalytic domain. The interaction with DNA stretch occupies residues 219 to 224 (SYGPCQ). Y342 (O-(5'-phospho-DNA)-tyrosine intermediate) is an active-site residue. The C4-type zinc finger occupies 642–670 (CNLCNESDMALRKNRDGNFMVGCMNYPQC). Disordered stretches follow at residues 740 to 760 (SRSQ…QGSN) and 775 to 806 (HAST…TVSC). A compositionally biased stretch (polar residues) spans 750–760 (TAPSNNIQGSN). Residues 767–782 (CIHCQQRGHASTNCPS) form a CCHC-type 1 zinc finger. Residues C806, C809, C831, and C836 each coordinate Zn(2+). The GRF-type zinc-finger motif lies at 806-845 (CNTCGSQCVLRTANTEANRGRQFFSCPTQGCSFFAWEDSI). The disordered stretch occupies residues 849 to 890 (SGNATTGSNSGGSGRRGSRGRGRGGRGGQSSGGRRGSGTSFV). The segment covering 873–884 (GRGGQSSGGRRG) has biased composition (gly residues). The CCHC-type 2 zinc finger occupies 901-917 (RCFSCGDPSHFANACPN).

This sequence belongs to the type IA topoisomerase family. As to quaternary structure, component of the RMI complex, containing at least TOP3A and RMI1. The RMI complex interacts with RECQL4A. Mg(2+) serves as cofactor.

The catalysed reaction is ATP-independent breakage of single-stranded DNA, followed by passage and rejoining.. Its function is as follows. Releases the supercoiling and torsional tension of DNA introduced during the DNA replication and transcription by transiently cleaving and rejoining one strand of the DNA duplex. Introduces a single-strand break via transesterification at a target site in duplex DNA. The scissile phosphodiester is attacked by the catalytic tyrosine of the enzyme, resulting in the formation of a DNA-(5'-phosphotyrosyl)-enzyme intermediate and the expulsion of a 3'-OH DNA strand. The free DNA strand then undergoes passage around the unbroken strand thus removing DNA supercoils. Finally, in the religation step, the DNA 3'-OH attacks the covalent intermediate to expel the active-site tyrosine and restore the DNA phosphodiester backbone. Essential component of the RMI complex, a complex that plays an important role in the resolution step of homologous recombination, in a process called Holliday Junction dissolution, to limit DNA crossover formation in cells. Together with RMI1, is essential for the resolution of meiotic recombination intermediates, a step that prevents entanglement of the parental chromosomes. May have DNA decatenation activity. The chain is DNA topoisomerase 3-alpha (TOP3A) from Arabidopsis thaliana (Mouse-ear cress).